The primary structure comprises 446 residues: UDP-N-acetylmuramoylalanine--D-glutamate ligase (446 aa).

116–122 is a binding site for ATP; sequence GSNGKTT.

The protein belongs to the MurCDEF family.

It localises to the cytoplasm. It catalyses the reaction UDP-N-acetyl-alpha-D-muramoyl-L-alanine + D-glutamate + ATP = UDP-N-acetyl-alpha-D-muramoyl-L-alanyl-D-glutamate + ADP + phosphate + H(+). Its pathway is cell wall biogenesis; peptidoglycan biosynthesis. Its function is as follows. Cell wall formation. Catalyzes the addition of glutamate to the nucleotide precursor UDP-N-acetylmuramoyl-L-alanine (UMA). The protein is UDP-N-acetylmuramoylalanine--D-glutamate ligase of Marinobacter nauticus (strain ATCC 700491 / DSM 11845 / VT8) (Marinobacter aquaeolei).